The following is a 218-amino-acid chain: UPF0598 protein C8orf82 homolog (218 aa).

This sequence belongs to the UPF0598 family.

In Rattus norvegicus (Rat), this protein is UPF0598 protein C8orf82 homolog.